A 363-amino-acid polypeptide reads, in one-letter code: NAD(P)H-quinone oxidoreductase subunit 1, chloroplastic (363 aa).

The next 6 membrane-spanning stretches (helical) occupy residues 27–47, 98–118, 127–147, 248–268, 300–320, and 336–356; these read IWLLVPIFTPVSGITIGVLVI, FSIGPSIAIISILLSYSVIPF, LSIGVFLWIAISSIAPIGLLM, YSGIKFGLFYVASYLNLLVSS, VFGTTIGIFITLAKAYLFLFI, and LLNLGWKFLLPISLGNLLLTT.

This sequence belongs to the complex I subunit 1 family. In terms of assembly, NDH is composed of at least 16 different subunits, 5 of which are encoded in the nucleus.

Its subcellular location is the plastid. It localises to the chloroplast thylakoid membrane. It catalyses the reaction a plastoquinone + NADH + (n+1) H(+)(in) = a plastoquinol + NAD(+) + n H(+)(out). The enzyme catalyses a plastoquinone + NADPH + (n+1) H(+)(in) = a plastoquinol + NADP(+) + n H(+)(out). In terms of biological role, NDH shuttles electrons from NAD(P)H:plastoquinone, via FMN and iron-sulfur (Fe-S) centers, to quinones in the photosynthetic chain and possibly in a chloroplast respiratory chain. The immediate electron acceptor for the enzyme in this species is believed to be plastoquinone. Couples the redox reaction to proton translocation, and thus conserves the redox energy in a proton gradient. This chain is NAD(P)H-quinone oxidoreductase subunit 1, chloroplastic, found in Platanus occidentalis (Sycamore).